Here is a 114-residue protein sequence, read N- to C-terminus: Ribulose bisphosphate carboxylase small subunit 2 (114 aa).

It belongs to the RuBisCO small chain family. In terms of assembly, heterohexadecamer of 8 large and 8 small subunits. Forms a CsoS2-CsoS1-RuBisCO complex.

It localises to the carboxysome. RuBisCO catalyzes two reactions: the carboxylation of D-ribulose 1,5-bisphosphate, the primary event in carbon dioxide fixation, as well as the oxidative fragmentation of the pentose substrate. Both reactions occur simultaneously and in competition at the same active site. Although the small subunit is not catalytic it is essential for maximal activity. Functionally, replacing the endogenous type I ccbLS genes in H.neapolitanus with this carboxysomally targeted enzyme reconstitutes RuBisCO with about 25% of normal activity; the active enzyme is targeted to carboxysomes. The polypeptide is Ribulose bisphosphate carboxylase small subunit 2 (Hydrogenovibrio crunogenus (strain DSM 25203 / XCL-2) (Thiomicrospira crunogena)).